We begin with the raw amino-acid sequence, 110 residues long: Large ribosomal subunit protein uL24 (110 aa).

The protein belongs to the universal ribosomal protein uL24 family. Part of the 50S ribosomal subunit.

Its function is as follows. One of two assembly initiator proteins, it binds directly to the 5'-end of the 23S rRNA, where it nucleates assembly of the 50S subunit. In terms of biological role, one of the proteins that surrounds the polypeptide exit tunnel on the outside of the subunit. The chain is Large ribosomal subunit protein uL24 from Caldicellulosiruptor saccharolyticus (strain ATCC 43494 / DSM 8903 / Tp8T 6331).